The sequence spans 385 residues: Interleukin-13 receptor subunit alpha-2 (385 aa).

Residues 1 to 23 (MALMAVNTRCLCLFLLCTITGHS) form the signal peptide. Residues 24–336 (LEIKVNPPQD…WEGYTGPDSK (313 aa)) are Extracellular-facing. Fibronectin type-III domains lie at 30–130 (PPQD…ADEG), 133–221 (GTKI…PIRS), and 236–334 (PPEF…TGPD). Cys61 and Cys109 form a disulfide bridge. A glycan (N-linked (GlcNAc...) asparagine) is linked at Asn111. The cysteines at positions 141 and 151 are disulfide-linked. N-linked (GlcNAc...) asparagine glycosylation is present at Asn164. Cys180 and Cys193 are disulfide-bonded. N-linked (GlcNAc...) asparagine glycosylation is found at Asn211 and Asn295. Residues Cys265 and Cys312 are joined by a disulfide bond. Residues 318–322 (WSEWS) carry the WSXWS motif motif. The helical transmembrane segment at 337 to 357 (IVFIVPVCLFFIFLLLLLCLI) threads the bilayer. Over 358 to 385 (VEKEDPEPTLSLHVDLNKEMYAYEETLC) the chain is Cytoplasmic.

This sequence belongs to the type I cytokine receptor family. Type 5 subfamily. Interacts with IL4RA. Interacts with high affinity to interleukin-13 (IL13), but not to interleukin-4 (IL4). In terms of processing, cleaved by MMP8 leading to a soluble form that is also able to interact with IL13.

The protein resides in the cell membrane. In terms of biological role, cell surface receptor that plays a role in the regulation of IL-13-mediated responses. Functions as a decoy receptor that inhibits IL-13- and IL-4-mediated signal transduction via the JAK-STAT pathway and thereby modulates immune responses and inflammation. Serves as a functional signaling receptor for IL-13 in an alternative pathway involving AP-1 ultimately leading to the production of TGFB1. This Rattus norvegicus (Rat) protein is Interleukin-13 receptor subunit alpha-2 (Il13ra2).